The following is a 362-amino-acid chain: MERITVNLAERSYPISIGAGLFEDPAYLSFLSGKQKVVVISNVTVAPLYADKILSLLDQVGCQTSLLELPDGEQYKNLETFNSVMSYMLEGNYSRDVVVIALGGGVIGDLVGFAASCYQRGIDFIQIPTTLLSQVDSSVGGKTAVNHPLGKNMIGAFYQPKSVIIDTNCLSTLPEREFAAGMAEVIKYGIIYDEAFFGWLEQNLEKLYQLDEDALITAIARCCAIKAEVVAIDEKESGIRALLNLGHTFGHAIEAELGYGNWLHGEAVSSGTVMAAKTAQLQGLISQQQLERIISILKNAKLPIHTPESMSFEDFMKHMMRDKKVLSGQLRLVLPTSIGTAEVVADVPQDIIKQAIDFCRTL.

Residues 71-76, 105-109, 129-130, K142, K151, and 169-172 contribute to the NAD(+) site; these read DGEQYK, GVIGD, TT, and CLST. Zn(2+) contacts are provided by E184, H247, and H264.

It belongs to the sugar phosphate cyclases superfamily. Dehydroquinate synthase family. The cofactor is Co(2+). Zn(2+) is required as a cofactor. It depends on NAD(+) as a cofactor.

Its subcellular location is the cytoplasm. It catalyses the reaction 7-phospho-2-dehydro-3-deoxy-D-arabino-heptonate = 3-dehydroquinate + phosphate. The protein operates within metabolic intermediate biosynthesis; chorismate biosynthesis; chorismate from D-erythrose 4-phosphate and phosphoenolpyruvate: step 2/7. Functionally, catalyzes the conversion of 3-deoxy-D-arabino-heptulosonate 7-phosphate (DAHP) to dehydroquinate (DHQ). The sequence is that of 3-dehydroquinate synthase from Vibrio atlanticus (strain LGP32) (Vibrio splendidus (strain Mel32)).